A 1333-amino-acid polypeptide reads, in one-letter code: snRNA-activating protein complex subunit 4 (1333 aa).

Residues 29–84 form a disordered region; it reads HFEVSESSLSSDSEADSLPDEDLETAGAPILEEEGSSESSNDEEDPKDKALPEDPE. Acidic residues-rich tracts occupy residues 41–52 and 59–73; these read SEADSLPDEDLE and LEEEGSSESSNDEED. A Phosphoserine modification is found at Ser68. The SNAPC5-binding stretch occupies residues 84–133; sequence ETCLQLNMVYQEVIREKLAEVSQLLAQNQEQQEEILFDLSGTKCPKVKDG. A Myb-like 1 domain is found at 250 to 288; that stretch reads EEALLGNRLDSHDWEKISNINFEGARSAEEIRKFWQSSE. The region spanning 289-343 is the HTH myb-type 1 domain; the sequence is HPSISKQEWSTEEVERLKAIAATHGHLEWHLVAEELGTSRSAFQCLQKFQQYNKT. A DNA-binding region (H-T-H motif) is located at residues 317 to 341; it reads WHLVAEELGTSRSAFQCLQKFQQYN. In terms of domain architecture, Myb-like 2 spans 344–395; sequence LKRKEWTEEEDHMLTQLVQEMRVGNHIPYRKIVYFMEGRDSMQLIYRWTKSL. 2 consecutive HTH myb-type domains span residues 396 to 451 and 452 to 503; these read DPSL…HFSL and KKGR…RKKQ. 2 consecutive DNA-binding regions (H-T-H motif) follow at residues 424–447 and 476–499; these read WFKIREEVPGRSDAQCRDRYIRRL and WARIASELPHRSGSQCLSKWKILA. Positions 503-515 are enriched in basic residues; sequence QHLQRKRGQRPRH. Disordered stretches follow at residues 503–558, 662–702, 811–842, and 1079–1117; these read QHLQ…LEKS, LMKE…QNKQ, NAKNNTGCLPSMTGEQTAKRASHKGRPRLGSC, and LPSPAKTPAFLEQPPASTDTEPKGPQGQEIPPTPGPEKA. The span at 516-546 shows a compositional bias: low complexity; it reads SSQWSSSGSSSSSSEDYGSSSGSDGSSGSEN. 2 stretches are compositionally biased toward polar residues: residues 672–686 and 811–826; these read LPSSRSGSDPGNNTA and NAKNNTGCLPSMTGEQ. Residues 1131 to 1247 are SNAPC2-binding; sequence AIVTWLKGCQ…NSIPTTLSPD (117 aa). Phosphoserine occurs at positions 1252, 1254, 1301, and 1309. The segment at 1282–1333 is disordered; that stretch reads PAAPDPVQSHLVSPGQRAPSPGEVSAPSPLDASDGLDDLNVLRTRRARHSRR. Residues 1324-1333 show a composition bias toward basic residues; it reads RTRRARHSRR.

As to quaternary structure, part of the SNAPc composed of 5 subunits: SNAPC1, SNAPC2, SNAPC3, SNAPC4 and SNAPC5. SNAPC4 interacts with SNAPC1, SNAPC2, SNAPC5, BRF2 and TBP.

It localises to the nucleus. Part of the SNAPc complex required for the transcription of both RNA polymerase II and III small-nuclear RNA genes. Binds to the proximal sequence element (PSE), a non-TATA-box basal promoter element common to these 2 types of genes. Recruits TBP and BRF2 to the U6 snRNA TATA box. The chain is snRNA-activating protein complex subunit 4 from Mus musculus (Mouse).